We begin with the raw amino-acid sequence, 740 residues long: MAEGSYRKESEGYNVEDMDEGSDEVGEEDMVEGNDYEEFGAFGGYGALTSFDIRILRAFGSLGPGFRILANEPWELENPVLARTLLEAFRMDPETLANETAARAANVARAAASNQAARAAATAARATYNQVVTNHHPVATHQASGGDTQPMTSAAQAPAATPETSVASPHSSRMLVNSEMAAPGAPARSPQPQTSSQAQEAAAEGPSTACAFPQASRASEMDATRPKTAFLGQNDAFDFSQPAGVSGMAFPRPKRPAPAQEAATEGPSVASRGTQAASAGEGAATRPKTTKSGKALAKTRWVEPQNVVAAAAAKAKMATSIPEPESAAATSQQSAEPWARMGGKRTKKSKHLDDEYESGEEEREPPAVPPTWRASQPLLTTARPQVAPRPSMALRSQVPSRHVLCLPPRNVTLLQERANKLVKYLMIKDYKKIPIKRSDMLKDVIREYDEHFPEIIERATYTLEKKFGIHLKEIDKEEHLYILVCTRDSSARLLGKTKDTPRLSLLLVILGVIFMNGNRASEAVLWEALRKMGLRPGVRHPFLGDLRKLITEDFVKQKYLEYKKVPNSSPPEYEFLWGLRACHETSKMRVLRFIAQYQNRDPREWRAHFLEAVDDAFKTMDVDMAEEHARAQMRAQMNIGEEALIGRWSWDDIQVELLTWDEDGDFGDAWSRIPFAFWARYHQYILNSNRPNRRGTWRAGVSSGTNGAASASMLDGPSTSSTIRTRNAARTSASFFSWIQ.

Basic and acidic residues predominate over residues 1–11; the sequence is MAEGSYRKESE. 4 disordered regions span residues 1 to 27, 139 to 208, 242 to 298, and 321 to 377; these read MAEGSYRKESEGYNVEDMDEGSDEVGE, ATHQ…GPST, PAGV…ALAK, and IPEP…ASQP. Positions 14 to 27 are enriched in acidic residues; that stretch reads NVEDMDEGSDEVGE. Composition is skewed to polar residues over residues 141–155 and 162–175; these read HQASGGDTQPMTSAA and PETSVASPHSSRML. The span at 185-207 shows a compositional bias: low complexity; it reads APARSPQPQTSSQAQEAAAEGPS. Over residues 321–337 the composition is skewed to low complexity; the sequence is IPEPESAAATSQQSAEP. Acidic residues predominate over residues 354–363; the sequence is DEYESGEEER. The region spanning 414–612 is the MAGE domain; sequence LQERANKLVK…REWRAHFLEA (199 aa). Residues 697 to 722 are disordered; sequence WRAGVSSGTNGAASASMLDGPSTSST.

As to quaternary structure, interacts with TRIM27.

Functionally, may enhance ubiquitin ligase activity of RING-type zinc finger-containing E3 ubiquitin-protein ligases. Proposed to act through recruitment and/or stabilization of the Ubl-conjugating enzyme (E2) at the E3:substrate complex. The sequence is that of Melanoma-associated antigen D4 (MAGED4) from Bos taurus (Bovine).